The primary structure comprises 65 residues: Weak toxin CM-13b (65 aa).

5 disulfides stabilise this stretch: cysteine 3-cysteine 24, cysteine 6-cysteine 11, cysteine 17-cysteine 42, cysteine 46-cysteine 57, and cysteine 58-cysteine 63.

It belongs to the three-finger toxin family. Ancestral subfamily. Orphan group II sub-subfamily. As to expression, expressed by the venom gland.

The protein resides in the secreted. Functionally, binds with low affinity to muscular (alpha-1-beta-1-delta-epsilon/CHRNA1-CHRNB1-CHRND-CHRNE) and very low affinity to neuronal (alpha-7/CHRNA7) nicotinic acetylcholine receptor (nAChR). The sequence is that of Weak toxin CM-13b from Naja annulifera (Banded Egyptian cobra).